Reading from the N-terminus, the 406-residue chain is CMP-sialic acid transporter 2 (406 aa).

The Cytoplasmic segment spans residues 1 to 41; it reads MKNGMAECSVCRSRLVSPSSKAISRAYDNYNYKIRVSSKQR. Residues 42 to 62 form a helical membrane-spanning segment; the sequence is ALNVFLVVGDCMLVGLQPVLV. At 63 to 75 the chain is on the lumenal side; that stretch reads YMSKVDGKFNFSP. The helical transmembrane segment at 76–96 threads the bilayer; the sequence is ISVNFLTEIAKVIFAMVMLLF. Residues 97-148 lie on the Cytoplasmic side of the membrane; it reads QARHQKVGEKPLLSLSTFVQAARNNMLLAVPAGLYAINNYLKFTMQLYFNPA. Residues 149 to 169 traverse the membrane as a helical segment; it reads TVKMLSNLKVLVIAVLLKMIM. Residues 170 to 172 are Lumenal-facing; sequence KRR. Residues 173–193 form a helical membrane-spanning segment; that stretch reads FSIIQWEALALLLIGISINQL. At 194 to 201 the chain is on the cytoplasmic side; it reads RSLPEGAT. A helical transmembrane segment spans residues 202–222; the sequence is TVAVPIATGAYICTFIFVTVP. At 223-245 the chain is on the lumenal side; sequence SLASVYNEYALKSQYDTSIYLQN. Residues 246–266 form a helical membrane-spanning segment; that stretch reads LFLYGYGAIFNFLGILGTVIY. Topologically, residues 267–282 are cytoplasmic; the sequence is KGPGSFDILQGHSRAT. Residues 283-303 form a helical membrane-spanning segment; the sequence is MFLILNNAAQGILSSFFFKYA. Residues 304-323 lie on the Lumenal side of the membrane; sequence DTILKKYSSTVATIFTGIAS. A helical transmembrane segment spans residues 324-344; that stretch reads AALFGHILTMNFLLGISIVFI. Topologically, residues 345–406 are cytoplasmic; sequence SMHQFFSPLS…SDDRVPLLPR (62 aa).

It belongs to the nucleotide-sugar transporter family. CMP-Sialate:CMP antiporter (TC 2.A.7.12) subfamily.

Its subcellular location is the golgi apparatus membrane. Functionally, sugar transporter involved in the transport of CMP-sialic acid from the cytoplasm into the Golgi. This is CMP-sialic acid transporter 2 from Arabidopsis thaliana (Mouse-ear cress).